A 137-amino-acid chain; its full sequence is Transcription antitermination protein NusB (137 aa).

This sequence belongs to the NusB family.

Its function is as follows. Involved in transcription antitermination. Required for transcription of ribosomal RNA (rRNA) genes. Binds specifically to the boxA antiterminator sequence of the ribosomal RNA (rrn) operons. This chain is Transcription antitermination protein NusB, found in Haemophilus ducreyi (strain 35000HP / ATCC 700724).